Reading from the N-terminus, the 2170-residue chain is Supervillin (2170 aa).

Residues 1–167 form an interaction with MYLK region; it reads MKRKERIARR…NSRHSRTESG (167 aa). Disordered regions lie at residues 37–94, 107–327, 413–444, 511–546, and 567–643; these read EDTP…HSLE, RRRQ…QSES, PEPLERSPKSLLTSEDDRLVRGHKDPSGNKDL, DYTGPPQLQVPRHKDEAPSQELELQSSRAEGPGAEA, and RASK…EDEE. At serine 50 the chain carries Phosphoserine. 2 stretches are compositionally biased toward polar residues: residues 63 to 73 and 81 to 90; these read PGSSLEKQTPS and GIHSSGSMDT. Basic and acidic residues predominate over residues 134–166; the sequence is SRKDPDVTERRGKSDKQEEQSKDANSRHSRTES. Residues 167-195 are compositionally biased toward polar residues; sequence GPRTSLVASQDCTPLGSNMSDQEQLLNVE. Residues serine 220, serine 227, and serine 241 each carry the phosphoserine modification. Positions 230–241 are enriched in polar residues; it reads QIPSSPLQQPAS. Composition is skewed to basic and acidic residues over residues 261 to 272 and 286 to 297; these read PTHEWFLQRDSE and KVREKLVKEESA. Polar residues predominate over residues 298–313; sequence RSSPELTSESLTQRRQ. Residues serine 299 and serine 300 each carry the phosphoserine modification. A compositionally biased stretch (basic and acidic residues) spans 427–444; sequence EDDRLVRGHKDPSGNKDL. 2 stretches are compositionally biased toward basic and acidic residues: residues 570-582 and 606-615; these read KKPELQSRVERSA and ESRKTSERFR. Serine 632, serine 666, serine 728, and serine 761 each carry phosphoserine. The segment at 743 to 771 is disordered; that stretch reads ASAHQKALARDQANEGRESAEPGEPDSST. Over residues 750–762 the composition is skewed to basic and acidic residues; the sequence is LARDQANEGRESA. The residue at position 809 (tyrosine 809) is a Phosphotyrosine. Phosphothreonine is present on threonine 811. A phosphoserine mark is found at serine 857, serine 877, and serine 881. A disordered region spans residues 887–909; it reads AWRPLVEHSGSKGMPGESGKTES. Residues serine 960, serine 1011, serine 1031, and serine 1077 each carry the phosphoserine modification. The tract at residues 1117 to 1137 is disordered; that stretch reads HTQEVEQSLKKKRVTESRESQ. Over residues 1119–1137 the composition is skewed to basic and acidic residues; sequence QEVEQSLKKKRVTESRESQ. At arginine 1159 the chain carries Omega-N-methylarginine. 2 positions are modified to phosphoserine: serine 1181 and serine 1184. Threonine 1186 is modified (phosphothreonine). 3 positions are modified to phosphoserine: serine 1190, serine 1278, and serine 1361. The interaction with NEB stretch occupies residues 1375–1643; that stretch reads SNINLRSVNL…KFLDWTELKR (269 aa). 5 Gelsolin-like repeats span residues 1397-1496, 1516-1638, 1708-1818, 1837-1938, and 1971-2078; these read KKLM…LGGQ, IETN…FLDW, VSVD…FQGG, WRLY…LGRR, and ATEF…FPSW. Residues 2107–2170 form the HP domain; that stretch reads KLCKTIYPLA…VNLKKSKGLF (64 aa).

Belongs to the villin/gelsolin family. As to quaternary structure, associates with F-actin. Interacts with NEB. Interacts with MYH9. Interacts with MYLK. Interacts with TASOR. Interacts with TRIP6. Interacts with DYNLT1. Interacts with KIF14; at midbody during cytokinesis. Expressed in the heart, tongue and granular cells within the cerebellum.

Its subcellular location is the cell membrane. It is found in the cytoplasm. The protein localises to the cytoskeleton. The protein resides in the cell projection. It localises to the invadopodium. Its subcellular location is the podosome. It is found in the midbody. The protein localises to the cleavage furrow. Functionally, forms a high-affinity link between the actin cytoskeleton and the membrane. Is among the first costameric proteins to assemble during myogenesis and it contributes to myogenic membrane structure and differentiation. Appears to be involved in myosin II assembly. May modulate myosin II regulation through MLCK during cell spreading, an initial step in cell migration. May play a role in invadopodial function. Its function is as follows. May be involved in modulation of focal adhesions. Supervillin-mediated down-regulation of focal adhesions involves binding to TRIP6. Plays a role in cytokinesis through KIF14 interaction. The sequence is that of Supervillin (Svil) from Mus musculus (Mouse).